The following is a 222-amino-acid chain: Probable transaldolase 2 (222 aa).

Lysine 90 serves as the catalytic Schiff-base intermediate with substrate.

The protein belongs to the transaldolase family. Type 3B subfamily.

It is found in the cytoplasm. The enzyme catalyses D-sedoheptulose 7-phosphate + D-glyceraldehyde 3-phosphate = D-erythrose 4-phosphate + beta-D-fructose 6-phosphate. Its pathway is carbohydrate degradation; pentose phosphate pathway; D-glyceraldehyde 3-phosphate and beta-D-fructose 6-phosphate from D-ribose 5-phosphate and D-xylulose 5-phosphate (non-oxidative stage): step 2/3. Functionally, transaldolase is important for the balance of metabolites in the pentose-phosphate pathway. This Bacillus anthracis protein is Probable transaldolase 2.